The sequence spans 172 residues: Translation initiation factor IF-3 (172 aa).

This sequence belongs to the IF-3 family. As to quaternary structure, monomer.

It is found in the cytoplasm. Its function is as follows. IF-3 binds to the 30S ribosomal subunit and shifts the equilibrium between 70S ribosomes and their 50S and 30S subunits in favor of the free subunits, thus enhancing the availability of 30S subunits on which protein synthesis initiation begins. This Haemophilus influenzae (strain ATCC 51907 / DSM 11121 / KW20 / Rd) protein is Translation initiation factor IF-3.